The following is a 290-amino-acid chain: MDKIIKTISENGSFRAYVLDSTETVRTAQEKHQTQASSTVALGRTLIASQILAANEKGQTKITVKVLGTSSLGAIITVADTEGNVKGYVQNPGVDIKKTATGEVLVGPFVGQGEFLVITDYGTGNPYNSMTPLISGEIGEDLAFYLTESQQTPSAVGLNVLLDENDKVKVAGGFLVQVLPGAKEAEIARFEKRIQEMPAISRLLESDDHIEALLAAIYGNEPYKRLSEEEIRFQCDCNKERFMNALATLPKADLEEMRDQDQGAEIVCQFCQTAYHFDQNDLEELIRDKS.

2 disulfides stabilise this stretch: cysteine 235–cysteine 237 and cysteine 268–cysteine 271.

Belongs to the HSP33 family. In terms of processing, under oxidizing conditions two disulfide bonds are formed involving the reactive cysteines. Under reducing conditions zinc is bound to the reactive cysteines and the protein is inactive.

Its subcellular location is the cytoplasm. Its function is as follows. Redox regulated molecular chaperone. Protects both thermally unfolding and oxidatively damaged proteins from irreversible aggregation. Plays an important role in the bacterial defense system toward oxidative stress. The chain is 33 kDa chaperonin from Streptococcus sanguinis (strain SK36).